Here is a 132-residue protein sequence, read N- to C-terminus: Bombinin-like peptides (132 aa).

The signal sequence occupies residues 1-18; that stretch reads MNFKYIIAVSFLIASAYA. Residues 19–42 constitute a propeptide that is removed on maturation; sequence RSEEYDIQSLSQRDVLEEESLRKI. Phe-68 carries the phenylalanine amide modification. Residues 72–112 constitute a propeptide that is removed on maturation; that stretch reads TAEDHEVMKRLEAAMRDLDSLDYPEEASERETRGFNQEEKE. Position 131 is a leucine amide (Leu-131).

The protein belongs to the bombinin family. In terms of tissue distribution, expressed by the skin glands.

The protein localises to the secreted. Its function is as follows. Has antimicrobial activity against Gram-negative bacterium E.coli (MIC=26.3 uM), Gram-positive bacterium S.aureus (MIC=26.3 uM) and yeast C.albicans (MIC=52.5 uM). Has moderate hemolytic activity towards human erythrocytes at a concentration of 52.2 uM. In terms of biological role, has no antimicrobial activity at concentrations up to 161 uM. Has moderate hemolytic activity towards human erythrocytes at a concentration of 40.3 uM. In Bombina orientalis (Oriental fire-bellied toad), this protein is Bombinin-like peptides.